Consider the following 193-residue polypeptide: Ion-translocating oxidoreductase complex subunit A (193 aa).

The next 6 helical transmembrane spans lie at L5–L25, I39–V59, F62–A82, L102–L122, A134–I154, and S171–V191.

This sequence belongs to the NqrDE/RnfAE family. In terms of assembly, the complex is composed of six subunits: RnfA, RnfB, RnfC, RnfD, RnfE and RnfG.

The protein localises to the cell inner membrane. Its function is as follows. Part of a membrane-bound complex that couples electron transfer with translocation of ions across the membrane. This chain is Ion-translocating oxidoreductase complex subunit A, found in Yersinia pestis (strain Pestoides F).